The following is a 175-amino-acid chain: NADH-quinone oxidoreductase subunit I (175 aa).

4Fe-4S ferredoxin-type domains lie at 44-74 (LNRYADGLEKCIGCELCAWACPADAIFVEGA) and 90-119 (RVYQINYLRCIGCGLCIEACPTRALTMTND). [4Fe-4S] cluster contacts are provided by cysteine 54, cysteine 57, cysteine 60, cysteine 64, cysteine 99, cysteine 102, cysteine 105, and cysteine 109. Positions 148–175 (PPHAMAPGATDEDYYRGTVSPSAEADAR) are disordered.

Belongs to the complex I 23 kDa subunit family. NDH-1 is composed of 14 different subunits. Subunits NuoA, H, J, K, L, M, N constitute the membrane sector of the complex. The cofactor is [4Fe-4S] cluster.

The protein resides in the cell membrane. It catalyses the reaction a quinone + NADH + 5 H(+)(in) = a quinol + NAD(+) + 4 H(+)(out). NDH-1 shuttles electrons from NADH, via FMN and iron-sulfur (Fe-S) centers, to quinones in the respiratory chain. The immediate electron acceptor for the enzyme in this species is believed to be menaquinone. Couples the redox reaction to proton translocation (for every two electrons transferred, four hydrogen ions are translocated across the cytoplasmic membrane), and thus conserves the redox energy in a proton gradient. This Mycolicibacterium gilvum (strain PYR-GCK) (Mycobacterium gilvum (strain PYR-GCK)) protein is NADH-quinone oxidoreductase subunit I.